The sequence spans 173 residues: ATP synthase subunit b (173 aa).

The chain crosses the membrane as a helical span at residues 18 to 38; the sequence is IFWSLVILIIVAVFFYKFFLP.

The protein belongs to the ATPase B chain family. As to quaternary structure, F-type ATPases have 2 components, F(1) - the catalytic core - and F(0) - the membrane proton channel. F(1) has five subunits: alpha(3), beta(3), gamma(1), delta(1), epsilon(1). F(0) has three main subunits: a(1), b(2) and c(10-14). The alpha and beta chains form an alternating ring which encloses part of the gamma chain. F(1) is attached to F(0) by a central stalk formed by the gamma and epsilon chains, while a peripheral stalk is formed by the delta and b chains.

It is found in the cell membrane. Its function is as follows. F(1)F(0) ATP synthase produces ATP from ADP in the presence of a proton or sodium gradient. F-type ATPases consist of two structural domains, F(1) containing the extramembraneous catalytic core and F(0) containing the membrane proton channel, linked together by a central stalk and a peripheral stalk. During catalysis, ATP synthesis in the catalytic domain of F(1) is coupled via a rotary mechanism of the central stalk subunits to proton translocation. In terms of biological role, component of the F(0) channel, it forms part of the peripheral stalk, linking F(1) to F(0). This is ATP synthase subunit b from Bifidobacterium adolescentis (strain ATCC 15703 / DSM 20083 / NCTC 11814 / E194a).